The chain runs to 143 residues: Large ribosomal subunit protein uL11 (143 aa).

This sequence belongs to the universal ribosomal protein uL11 family. Part of the ribosomal stalk of the 50S ribosomal subunit. Interacts with L10 and the large rRNA to form the base of the stalk. L10 forms an elongated spine to which L12 dimers bind in a sequential fashion forming a multimeric L10(L12)X complex. One or more lysine residues are methylated.

Functionally, forms part of the ribosomal stalk which helps the ribosome interact with GTP-bound translation factors. This Laribacter hongkongensis (strain HLHK9) protein is Large ribosomal subunit protein uL11.